The following is a 930-amino-acid chain: Isoleucine--tRNA ligase (930 aa).

The 'HIGH' region motif lies at 57 to 67 (PYANGHIHLGT). Glu559 contributes to the L-isoleucyl-5'-AMP binding site. The short motif at 600-604 (KMSKS) is the 'KMSKS' region element. Lys603 is a binding site for ATP. Cys899, Cys902, Cys918, and Cys921 together coordinate Zn(2+).

This sequence belongs to the class-I aminoacyl-tRNA synthetase family. IleS type 1 subfamily. As to quaternary structure, monomer. Zn(2+) is required as a cofactor.

It localises to the cytoplasm. The enzyme catalyses tRNA(Ile) + L-isoleucine + ATP = L-isoleucyl-tRNA(Ile) + AMP + diphosphate. Functionally, catalyzes the attachment of isoleucine to tRNA(Ile). As IleRS can inadvertently accommodate and process structurally similar amino acids such as valine, to avoid such errors it has two additional distinct tRNA(Ile)-dependent editing activities. One activity is designated as 'pretransfer' editing and involves the hydrolysis of activated Val-AMP. The other activity is designated 'posttransfer' editing and involves deacylation of mischarged Val-tRNA(Ile). This Desulforudis audaxviator (strain MP104C) protein is Isoleucine--tRNA ligase.